We begin with the raw amino-acid sequence, 1191 residues long: Phosphatidylinositol 3,4,5-trisphosphate 5-phosphatase 1 (1191 aa).

An SH2 domain is found at 8-104 (WNHGNITRSK…GLVTHLQYPV (97 aa)). The tract at residues 122–148 (SVMSPPELPPRNIPMSAGPSEAKDLPL) is disordered. An SH3-binding 1 motif is present at residues 127–132 (PELPPR). Position 246 is a phosphoserine (S246). Residues 915-918 (NPNY) carry the NPXY motif 1 motif. Y918 carries the post-translational modification Phosphotyrosine. S935 carries the post-translational modification Phosphoserine. Y945 is subject to Phosphotyrosine. Disordered regions lie at residues 947 to 994 (QLPK…EARP) and 1021 to 1191 (YGSV…TAMQ). Positions 962–972 (PPTPPSQPPLS) are enriched in pro residues. T964 carries the phosphothreonine modification. S967 and S972 each carry phosphoserine. The SH3-binding 2 motif lies at 970-975 (PLSPKK). The interval 1015–1029 (MFENPLYGSVSSFPK) is interaction with DAB2. Positions 1018–1021 (NPLY) match the NPXY motif 2 motif. Position 1021 is a phosphotyrosine (Y1021). Basic and acidic residues predominate over residues 1032–1046 (PRKEQESPKMLRKEP). The SH3-binding 3 signature appears at 1039–1050 (PKMLRKEPPPCP). The span at 1141–1150 (IPAPRPPLPV) shows a compositional bias: pro residues. Positions 1162-1184 (KGRDYRDNTELPHHGKHRQEEGL) are enriched in basic and acidic residues.

This sequence belongs to the inositol 1,4,5-trisphosphate 5-phosphatase family. As to quaternary structure, interacts with tyrosine phosphorylated form of SHC1. Interacts with tyrosine phosphorylated form of DOK1. Interacts with tyrosine phosphorylated form of DOK3. Interacts with tyrosine phosphorylated form of SLAMF1/CD150. Interacts with PTPN11/SHP-2 in response to IL-3. Interacts with receptor EPOR. Interacts with receptors MS4A2/FCER1B and FCER1G. Interacts with receptors FCGR2B and FCGR3. Interacts with receptor FCGR2A, leading to regulate gene expression during the phagocytic process. Interacts with GRB2. Interacts with PLCG1. Interacts with tyrosine kinases SRC and TEC. Interacts with CRKL. Interacts with c-Met/MET. Interacts with MILR1 (tyrosine-phosphorylated). Isoform 5 interacts with IL6ST/gp130. Can weakly interact (via NPXY motif 2) with DAB2 (via PID domain); the interaction is impaired by tyrosine phosphorylation of the NPXY motif. Interacts (via SH2 domain) with tyrosine phosphorylated KLRC1 (via ITIM). Interacts with MPL/TPOR. In terms of processing, tyrosine phosphorylated by the members of the SRC family after exposure to a diverse array of extracellular stimuli such as cytokines, growth factors, antibodies, chemokines, integrin ligands and hypertonic and oxidative stress. Phosphorylated upon IgG receptor FCGR2B-binding. In terms of tissue distribution, specifically expressed in immune and hematopoietic cells. Levels vary considerably within this compartment. Lost during erythropoiesis when erythroid cells become Ter119+. Increases substantially with T-cell maturation and when resting B-cells are activated. Also present in mature granulocytes, monocyte/macrophages, mast cells and platelets. Isoform 5 is the only form expressed in embryonic stem (ES) cells and is coexpressed with other isoforms in hematopoietic stem cells, and disappears with differentiation.

It localises to the cytoplasm. The protein localises to the cell membrane. Its subcellular location is the membrane raft. The protein resides in the cytoskeleton. The enzyme catalyses a 1,2-diacyl-sn-glycero-3-phospho-(1D-myo-inositol-3,4,5-trisphosphate) + H2O = a 1,2-diacyl-sn-glycero-3-phospho-(1D-myo-inositol-3,4-bisphosphate) + phosphate. It catalyses the reaction a 1,2-diacyl-sn-glycero-3-phospho-(1D-myo-inositol-4,5-bisphosphate) + H2O = a 1,2-diacyl-sn-glycero-3-phospho-(1D-myo-inositol 4-phosphate) + phosphate. The catalysed reaction is 1D-myo-inositol 1,3,4,5-tetrakisphosphate + H2O = 1D-myo-inositol 1,3,4-trisphosphate + phosphate. With respect to regulation, activated upon translocation to the sites of synthesis of PtdIns(3,4,5)P3 in the membrane. Phosphatidylinositol (PtdIns) phosphatase that specifically hydrolyzes the 5-phosphate of phosphatidylinositol-3,4,5-trisphosphate (PtdIns(3,4,5)P3) to produce PtdIns(3,4)P2, thereby negatively regulating the PI3K (phosphoinositide 3-kinase) pathways. Also able to hydrolyze the 5-phosphate of phosphatidylinositol-4,5-bisphosphate (PtdIns(4,5)P3) and inositol 1,3,4,5-tetrakisphosphate. Acts as a negative regulator of B-cell antigen receptor signaling. Mediates signaling from the FC-gamma-RIIB receptor (FCGR2B), playing a central role in terminating signal transduction from activating immune/hematopoietic cell receptor systems. Acts as a negative regulator of myeloid cell proliferation/survival and chemotaxis, mast cell degranulation, immune cells homeostasis, integrin alpha-IIb/beta-3 signaling in platelets and JNK signaling in B-cells. Regulates proliferation of osteoclast precursors, macrophage programming, phagocytosis and activation and is required for endotoxin tolerance. Involved in the control of cell-cell junctions, CD32a signaling in neutrophils and modulation of EGF-induced phospholipase C activity. Key regulator of neutrophil migration, by governing the formation of the leading edge and polarization required for chemotaxis. Modulates FCGR3/CD16-mediated cytotoxicity in NK cells. Mediates the activin/TGF-beta-induced apoptosis through its Smad-dependent expression. The polypeptide is Phosphatidylinositol 3,4,5-trisphosphate 5-phosphatase 1 (Inpp5d) (Mus musculus (Mouse)).